Reading from the N-terminus, the 359-residue chain is Peptide chain release factor 1 (359 aa).

Gln-236 carries the post-translational modification N5-methylglutamine.

It belongs to the prokaryotic/mitochondrial release factor family. Methylated by PrmC. Methylation increases the termination efficiency of RF1.

It is found in the cytoplasm. Its function is as follows. Peptide chain release factor 1 directs the termination of translation in response to the peptide chain termination codons UAG and UAA. This is Peptide chain release factor 1 from Streptococcus pneumoniae serotype 19F (strain G54).